We begin with the raw amino-acid sequence, 247 residues long: MWGPGVTAEGLSVAPAPPPLLPLLLLLALALVAPSRGGGGCAELACGERERCCDSANATAVRCCKLPLHAFLDNVGWFVRKLSGLLILLVLFAIGYFLQRIICPSPRRYPRGQARPGQARPGPPGGAGPPGTAGPPDDDDDSPALLRDEVAAGSQDSLLDSGGGRGRGSGGRLPPSCVSEHELHVVSPVFLQLPSYEEVKYLPTYEESMRLQQLSPAEVVLPVSVLGRPRGGSAGDSDGGQVRFPLI.

An N-terminal signal peptide occupies residues 1-35; the sequence is MWGPGVTAEGLSVAPAPPPLLPLLLLLALALVAPS. Residues 82-102 traverse the membrane as a helical segment; that stretch reads LSGLLILLVLFAIGYFLQRII. The tract at residues 109–176 is disordered; sequence YPRGQARPGQ…RGSGGRLPPS (68 aa). Over residues 111-120 the composition is skewed to low complexity; it reads RGQARPGQAR. A compositionally biased stretch (gly residues) spans 161-171; the sequence is SGGGRGRGSGG.

It is found in the membrane. This is an uncharacterized protein from Mus musculus (Mouse).